We begin with the raw amino-acid sequence, 213 residues long: Adenylate kinase (213 aa).

10–15 (GAGKGT) contacts ATP. The tract at residues 30-59 (AVGDIFRTIIKTSTSEAELINNYVKQGALI) is NMP. AMP is bound by residues Arg36, 57-59 (ALI), 85-88 (GYPR), and Gln92. An LID region spans residues 123–161 (GRYSCKNCGKIYNVHFLQPKTDYVCDVCSSNVFDYRRDD). ATP is bound at residue Arg124. Positions 127 and 130 each coordinate Zn(2+). 133–134 (IY) contacts ATP. Zn(2+) is bound by residues Cys147 and Cys150. 2 residues coordinate AMP: Arg158 and Arg169. ATP is bound at residue Lys197.

Belongs to the adenylate kinase family. As to quaternary structure, monomer.

The protein localises to the cytoplasm. The enzyme catalyses AMP + ATP = 2 ADP. The protein operates within purine metabolism; AMP biosynthesis via salvage pathway; AMP from ADP: step 1/1. In terms of biological role, catalyzes the reversible transfer of the terminal phosphate group between ATP and AMP. Plays an important role in cellular energy homeostasis and in adenine nucleotide metabolism. The chain is Adenylate kinase from Rickettsia typhi (strain ATCC VR-144 / Wilmington).